A 450-amino-acid chain; its full sequence is Protein tweety homolog 1 (450 aa).

At 1-43 (MGAPPGYRPSAWVHLLHQLPRADFQLRPVPSAFAPQEREYQQA) the chain is on the extracellular side. A helical transmembrane segment spans residues 44–64 (LLLVAALAGLGLGLSLIFIAV). The Cytoplasmic portion of the chain corresponds to 65–88 (YLIRFCCCRPPEPPGAKSPPPGGG). A helical membrane pass occupies residues 89 to 109 (CVTWNCIAALLVGCAGIGVGF). Residues 110-214 (YGNSETSDGV…DVSFVEEYRW (105 aa)) are Extracellular-facing. Asn130 carries an N-linked (GlcNAc...) asparagine glycan. A helical membrane pass occupies residues 215 to 235 (LAYVLLLLLELLVCLFTLLGL). At 236–240 (ARQSK) the chain is on the cytoplasmic side. Residues 241–261 (WLVIVMTVMSLLVLVLSWGSM) traverse the membrane as a helical segment. The Extracellular segment spans residues 262 to 390 (GLEAATAVGL…LRGLCEDTLE (129 aa)). 2 cysteine pairs are disulfide-bonded: Cys275–Cys385 and Cys303–Cys370. N-linked (GlcNAc...) asparagine glycosylation is found at Asn284 and Asn355. The helical transmembrane segment at 391–411 (GLLFLLLFSLLSAGALATVLC) threads the bilayer. The Cytoplasmic segment spans residues 412-450 (SLPRAWALFPPSDDYEDTDDDDPFNPQESKRFVQWQSSI). The interval 427–450 (EDTDDDDPFNPQESKRFVQWQSSI) is disordered. Ser440 is modified (phosphoserine).

It belongs to the tweety family. In terms of assembly, homotetramer; disulfide-linked. Homodimer. In terms of processing, N-glycosylated. Contains high-mannose, hybrid and complex oligosaccharides.

Its subcellular location is the cell membrane. The catalysed reaction is chloride(in) = chloride(out). It carries out the reaction L-glutamate(out) = L-glutamate(in). Its function is as follows. Calcium-independent, swelling-dependent volume-regulated anion channel (VRAC-swell) which plays a pivotal role in the process of regulatory volume decrease (RVD) in the brain through the efflux of anions like chloride and organic osmolytes like glutamate. This Bos taurus (Bovine) protein is Protein tweety homolog 1 (TTYH1).